The chain runs to 542 residues: Glutamyl-tRNA reductase 2, chloroplastic (542 aa).

Residues 142-145 (TCNR), S202, 207-209 (EGQ), and Q213 contribute to the substrate site. C143 functions as the Nucleophile in the catalytic mechanism. Position 284–289 (284–289 (GAGKMG)) interacts with NADP(+).

The protein belongs to the glutamyl-tRNA reductase family. Found in all tissues examined.

It is found in the plastid. Its subcellular location is the chloroplast. The enzyme catalyses (S)-4-amino-5-oxopentanoate + tRNA(Glu) + NADP(+) = L-glutamyl-tRNA(Glu) + NADPH + H(+). Its pathway is porphyrin-containing compound metabolism; protoporphyrin-IX biosynthesis; 5-aminolevulinate from L-glutamyl-tRNA(Glu): step 1/2. Catalyzes the NADPH-dependent reduction of glutamyl-tRNA(Glu) to glutamate 1-semialdehyde (GSA). The polypeptide is Glutamyl-tRNA reductase 2, chloroplastic (HEMA2) (Cucumis sativus (Cucumber)).